The primary structure comprises 242 residues: Ribosomal RNA small subunit methyltransferase G (242 aa).

S-adenosyl-L-methionine is bound by residues Gly-81, Phe-86, 104-106, 132-133, and Arg-151; these read DST and AE.

Belongs to the methyltransferase superfamily. RNA methyltransferase RsmG family.

The protein localises to the cytoplasm. Its function is as follows. Specifically methylates the N7 position of a guanine in 16S rRNA. This Synechococcus elongatus (strain ATCC 33912 / PCC 7942 / FACHB-805) (Anacystis nidulans R2) protein is Ribosomal RNA small subunit methyltransferase G.